The sequence spans 663 residues: 72 kDa type IV collagenase (663 aa).

An N-terminal signal peptide occupies residues 1–26 (MKTHSVFGFFFKVLLIQVYLFNKTLA). The propeptide at 27-106 (APSPIIKFPG…PRCGNPDVAN (80 aa)) is activation peptide. The short motif at 97-104 (PRCGNPDV) is the Cysteine switch element. Zn(2+) is bound at residue Cys-99. Residues 107 to 218 (YNFFPRKPKW…LWTLGEGQVV (112 aa)) form a collagenase-like 1 region. Residues Asp-131 and Asp-165 each coordinate Ca(2+). Residues His-175 and Asp-177 each coordinate Zn(2+). Ca(2+)-binding residues include Asp-182 and Gly-183. Residue His-190 coordinates Zn(2+). The Ca(2+) site is built by Gly-197, Gly-199, and Asp-201. Zn(2+) is bound at residue His-203. Residues Asp-205, Asp-206, and Glu-208 each contribute to the Ca(2+) site. A collagen-binding region spans residues 219-393 (RVKYGNADGE…WGFCPDQGYS (175 aa)). 3 consecutive Fibronectin type-II domains span residues 225–273 (ADGE…FCPH), 283–331 (GDGQ…FCPE), and 341–389 (SEGA…FCPD). Cystine bridges form between Cys-230/Cys-256, Cys-244/Cys-271, Cys-288/Cys-314, Cys-302/Cys-329, Cys-346/Cys-372, and Cys-360/Cys-387. A collagenase-like 2 region spans residues 394–468 (LFLVAAHEFG…GPRPTLGPVT (75 aa)). A Zn(2+)-binding site is contributed by His-400. Residue Glu-401 is part of the active site. Residues His-404 and His-410 each contribute to the Zn(2+) site. Residues 445–464 (SPDVEPGPGPGPGPGPRPTL) form a disordered region. A compositionally biased stretch (pro residues) spans 449–463 (EPGPGPGPGPGPRPT). A disulfide bond links Cys-472 and Cys-663. Hemopexin repeat units lie at residues 475–519 (DIVF…WPDL), 520–566 (PEKI…GLPP), 568–616 (VQRI…WNGV), and 617–663 (PDNL…WLGC). Asp-479, Asp-524, Asp-572, and Asp-621 together coordinate Ca(2+).

It belongs to the peptidase M10A family. As to quaternary structure, ligand for integrin alpha-V/beta-3. Ca(2+) is required as a cofactor. The cofactor is Zn(2+). Post-translationally, the propeptide is processed by MMP14 (MT-MMP1) and MMP16 (MT-MMP3). In terms of tissue distribution, produced by normal skin fibroblasts.

The protein localises to the secreted. It localises to the extracellular space. It is found in the extracellular matrix. It carries out the reaction Cleavage of gelatin type I and collagen types IV, V, VII, X. Cleaves the collagen-like sequence Pro-Gln-Gly-|-Ile-Ala-Gly-Gln.. This is 72 kDa type IV collagenase (MMP2) from Gallus gallus (Chicken).